Reading from the N-terminus, the 227-residue chain is UPF0758 protein SSA_1218 (227 aa).

The region spanning 104–226 (QIMGSQKLAR…YYSYREETDM (123 aa)) is the MPN domain. Zn(2+)-binding residues include His-175, His-177, and Asp-188. A JAMM motif motif is present at residues 175 to 188 (HNHPSGSVVPSRND).

The protein belongs to the UPF0758 family.

This Streptococcus sanguinis (strain SK36) protein is UPF0758 protein SSA_1218.